The sequence spans 148 residues: Deoxyuridine 5'-triphosphate nucleotidohydrolase (148 aa).

Substrate-binding positions include 68–70 (RSG), asparagine 81, 85–87 (TID), and lysine 95.

Belongs to the dUTPase family. The cofactor is Mg(2+).

The catalysed reaction is dUTP + H2O = dUMP + diphosphate + H(+). It participates in pyrimidine metabolism; dUMP biosynthesis; dUMP from dCTP (dUTP route): step 2/2. In terms of biological role, this enzyme is involved in nucleotide metabolism: it produces dUMP, the immediate precursor of thymidine nucleotides and it decreases the intracellular concentration of dUTP so that uracil cannot be incorporated into DNA. The sequence is that of Deoxyuridine 5'-triphosphate nucleotidohydrolase from Rickettsia felis (strain ATCC VR-1525 / URRWXCal2) (Rickettsia azadi).